The chain runs to 751 residues: MATPFKVLIVGGGVAGLSLAIMLEAYGFDYELLEKHPDVAPKLGAGVGLTPNGARILDQIGVWDSMCEYASPVDAGIALSPTGNTVIFNPHMGEWLEKLFGYKIHFLSRHDCLRILFDKIKQKSNIHLRKEVTRISVGQPGEKAQVETKDGSTYIADLVIGADGVRSSVRNELWRIADTEKPGYIPNRDKSGIVSIYTAVIGIAHDPGLPRGGSARAYNHLRSYFTQEGVEGSGVFYWWLCTKNEEPIKGIVPKLSSDTKQTLLDKYADDQIGHGLTLGGLYKKSVYSAIIPLQEFVLEKCFYKNILLIGDTFRKLHPVAGQGANSAIEESALVADILWQLRENNALHDAAGMKQALTEFQEERFVRTTALREDANLVQRMESFDNLFMKFLSLHVIPRLPFVVAFLPQLGSAFTPARCMKYLPPPKAGMCPFSPDMQAKPNPRSPLATISWIVFLTLAACFPWSVHRLLPASSSSLPGFSEVFQLYTSVMAVSISGLWVIESYKASLLISPMFSSLPWILASNYWGWDKTLPVYLCFHVISSQHTVHYYTPQFMTDLGAAKALLPCLAMAYSIPGILTALASTDQTLSDWWPVAHCTFPVLVYVSSTFLRGMKAVPQGVEVVFSSVDLPYQRRFLTAIAVVSSAVHVTLIWNHGAALLNEGIISLLSVPLARTLASLTALIVAWGIYMTWEMRRIFATEVSLVKAWAVILVSTVLLGPAASLAGATYWSKVMLEKATSMQPLVQPTNGKS.

Residues 8-28 (LIVGGGVAGLSLAIMLEAYGF) form a helical membrane-spanning segment. FAD is bound by residues glutamate 34, glycine 48, and arginine 109. Tyrosine 218 is an active-site residue. Positions 311 and 324 each coordinate FAD. The next 8 helical transmembrane spans lie at 446 to 466 (PLATISWIVFLTLAACFPWSV), 481 to 501 (SEVFQLYTSVMAVSISGLWVI), 508 to 528 (LLISPMFSSLPWILASNYWGW), 563 to 583 (ALLPCLAMAYSIPGILTALAS), 590 to 610 (DWWPVAHCTFPVLVYVSSTFL), 639 to 659 (IAVVSSAVHVTLIWNHGAALL), 663 to 683 (IISLLSVPLARTLASLTALIV), and 706 to 726 (AWAVILVSTVLLGPAASLAGA).

It belongs to the paxM FAD-dependent monooxygenase family. Requires FAD as cofactor.

Its subcellular location is the membrane. Its pathway is secondary metabolite biosynthesis; terpenoid biosynthesis. Its function is as follows. FAD-dependent monooxygenase; part of the gene cluster that mediates the biosynthesis of the meroterpenoids arthripenoids. The pathway begins with the HR-PKS atnH that catalyzes two chain-extension steps to form a reduced triketide, which then primes the SAT domain in the NR-PKS atnG to initiate three more cycles of extension to give a linear hexaketide corresponding to the polyketide part of arthripenoids. The FAD-dependent monooxygenase atnJ then performs an oxidative decarboxylation at C11 of the atnH/atnG product, via an electrophilic aromatic hydroxylation with concomitant ipso-decarboxylation. The membrane-bound polyprenyl transferase atnF then introduces a farnesyl group before the FAD-dependent monooxygenase atnK functions as the first epoxidase on terminal C12'-C13' olefin, followed by a second epoxidation on C7'-C8' catalyzed by atnA. The terpene cyclase/mutase atnI then initiates the sequential tricyclic ring formation through protonation of the terminal epoxide and catalyzes the regioselective and stereoselective 6/6/6-tricyclic ring formation. The cytochrome P450 monooxygenase atnM is responsible for hydroxylating both C1' and C10'. The next steps may involve ketoreduction and acetyl transfer by the ketoreductase atnB and the acetyltransferase atnC, and lead to the production of arthripenoid B, the final biosynthetic product of the atn cluster. The hydroquinone moiety in arthripenoid B is prone to undergo spontaneous oxidation to afford a benzoquinone compound, a key intermediate for generating structure diversity. For instance, addition of a cysteine followed by ring contraction gives arthripenoid A, tautomerization gives the main product arthripenoid C, addition of a molecular of water or amine affords arthripenoid D or E, respectively, and loss of one water forms arthripenoid F. The polypeptide is FAD-dependent monooxygenase atnA (Arthrinium sp).